We begin with the raw amino-acid sequence, 555 residues long: Formate--tetrahydrofolate ligase (555 aa).

65–72 (TPAGEGKS) provides a ligand contact to ATP.

The protein belongs to the formate--tetrahydrofolate ligase family.

The catalysed reaction is (6S)-5,6,7,8-tetrahydrofolate + formate + ATP = (6R)-10-formyltetrahydrofolate + ADP + phosphate. It participates in one-carbon metabolism; tetrahydrofolate interconversion. The chain is Formate--tetrahydrofolate ligase from Staphylococcus aureus (strain COL).